A 279-amino-acid polypeptide reads, in one-letter code: Thymidylate synthase (279 aa).

Position 141–142 (141–142 (RR)) interacts with dUMP. Catalysis depends on Cys-161, which acts as the Nucleophile. Residues 181–184 (RSND), Asn-192, and 222–224 (HVY) contribute to the dUMP site. Asp-184 serves as a coordination point for (6R)-5,10-methylene-5,6,7,8-tetrahydrofolate. Residue Ala-278 coordinates (6R)-5,10-methylene-5,6,7,8-tetrahydrofolate.

It belongs to the thymidylate synthase family. Bacterial-type ThyA subfamily. In terms of assembly, homodimer.

The protein localises to the cytoplasm. The catalysed reaction is dUMP + (6R)-5,10-methylene-5,6,7,8-tetrahydrofolate = 7,8-dihydrofolate + dTMP. It participates in pyrimidine metabolism; dTTP biosynthesis. Its function is as follows. Catalyzes the reductive methylation of 2'-deoxyuridine-5'-monophosphate (dUMP) to 2'-deoxythymidine-5'-monophosphate (dTMP) while utilizing 5,10-methylenetetrahydrofolate (mTHF) as the methyl donor and reductant in the reaction, yielding dihydrofolate (DHF) as a by-product. This enzymatic reaction provides an intracellular de novo source of dTMP, an essential precursor for DNA biosynthesis. This Bacillus mojavensis protein is Thymidylate synthase.